The following is a 43-amino-acid chain: Large ribosomal subunit protein uL11 (43 aa).

It belongs to the universal ribosomal protein uL11 family. In terms of assembly, part of the ribosomal stalk of the 50S ribosomal subunit. Interacts with L10 and the large rRNA to form the base of the stalk. L10 forms an elongated spine to which L12 dimers bind in a sequential fashion forming a multimeric L10(L12)X complex. One or more lysine residues are methylated.

Its function is as follows. Forms part of the ribosomal stalk which helps the ribosome interact with GTP-bound translation factors. The protein is Large ribosomal subunit protein uL11 (rplK) of Streptomyces galbus.